We begin with the raw amino-acid sequence, 78 residues long: Beta-defensin 12 (78 aa).

The signal sequence occupies residues 1-27 (MALSRGTFYFGLALFFIVVELPSGSWA). Intrachain disulfides connect C46–C73, C53–C67, and C57–C74.

This sequence belongs to the beta-defensin family.

Its subcellular location is the secreted. Has antibacterial activity. The polypeptide is Beta-defensin 12 (Defb12) (Rattus norvegicus (Rat)).